The primary structure comprises 366 residues: Galactoside alpha-(1,2)-fucosyltransferase 1 (366 aa).

The Cytoplasmic portion of the chain corresponds to 1-8 (MWPPSHRQ). The helical; Signal-anchor for type II membrane protein transmembrane segment at 9 to 25 (LCLAFLLVCVLSVISFF) threads the bilayer. Residues 26 to 366 (LHIHQDSFPH…LSSLWTLAKP (341 aa)) lie on the Lumenal side of the membrane. N-linked (GlcNAc...) asparagine glycosylation is found at Asn66, Asn302, and Asn328.

It belongs to the glycosyltransferase 11 family.

It localises to the golgi apparatus. The protein resides in the golgi stack membrane. It carries out the reaction a beta-D-galactosyl-(1-&gt;4)-N-acetyl-beta-D-glucosaminyl derivative + GDP-beta-L-fucose = an alpha-L-Fuc-(1-&gt;2)-beta-D-Gal-(1-&gt;4)-beta-D-GlcNAc derivative + GDP + H(+). The enzyme catalyses a ganglioside GA1 + GDP-beta-L-fucose = a ganglioside Fuc-GA1 + GDP + H(+). It catalyses the reaction a beta-D-Gal-(1-&gt;3)-beta-D-GlcNAc-(1-&gt;3)-beta-D-Gal-(1-&gt;4)-beta-D-Glc-(1&lt;-&gt;1')-Cer(d18:1(4E)) + GDP-beta-L-fucose = alpha-L-fucosyl-(1-&gt;2)- beta-D-galactosyl-(1-&gt;3)-N-acetyl-beta-D-glucosaminyl-(1-&gt;3)-beta-D-galactosyl-(1-&gt;4)-beta-D-glucosyl-(1&lt;-&gt;1')-N-acylsphing-4-enine + GDP + H(+). The catalysed reaction is a neolactoside nLc4Cer(d18:1(4E)) + GDP-beta-L-fucose = a neolactoside IV(2)-alpha-Fuc-nLc4Cer(d18:1(4E)) + GDP + H(+). It carries out the reaction a ganglioside GM1 + GDP-beta-L-fucose = a ganglioside Fuc-GM1 + GDP + H(+). The enzyme catalyses beta-D-galactosyl-(1-&gt;3)-N-acetyl-D-galactosamine + GDP-beta-L-fucose = alpha-L-fucosyl-(1-&gt;2)-beta-D-galactosyl-(1-&gt;3)-N-acetyl-D-galactosamine + GDP + H(+). Its pathway is protein modification; protein glycosylation. In terms of biological role, catalyzes the transfer of L-fucose, from a guanosine diphosphate-beta-L-fucose, to the terminal galactose residue of glycoconjugates through an alpha(1,2) linkage leading to H antigen synthesis that is an intermediate substrate in the synthesis of ABO blood group antigens. H antigen is essential for maturation of the glomerular layer of the main olfactory bulb, in cell migration and early cell-cell contacts during tumor associated angiogenesis. Preferentially fucosylates soluble lactose and to a lesser extent fucosylates glycolipids gangliosides GA1 and GM1a. This Pan troglodytes (Chimpanzee) protein is Galactoside alpha-(1,2)-fucosyltransferase 1.